The primary structure comprises 440 residues: MSPAIKAPLLPNQEPSSSSSENHGSFAGAVFNISTSIVGAGIMAIPAAFKVLGVIPSLSIIVIIAWLSNVSAGFLMKSSLAGESTTYAGVMKESFGKSGAVAVTVVTMVVTFGSMIIFSIIIGDVISGNEKDGIIHLGLLQEWFGSHWWNTRFFGLLFIFVFLFLPLVLCRRVERLAFSSAISFLLALLFVVISSVLAIIALVQGKTKPPRLFPELNDGGLSFFSLFTASPVIVTAFTFHFNVHPVAFELKDPLNVLSATRISVILCATIYSATGLFCYLLFGDSTMTDVLMNFDQSTSSSVGSLLNDIVRLSYAIHLMLVFPLLNFSLRANLDELLFPMKLSLVEDNKRFFALTFPLLISCFLGAIAIPDIWYFFQFLGSTSTVSIAFIFPAAIVLRNVNGFSTLREKIVASVMLVLAVATSIIAISTNIYTFTATEET.

11 consecutive transmembrane segments (helical) span residues 26 to 46 (FAGA…MAIP), 47 to 67 (AAFK…IAWL), 102 to 122 (AVTV…SIII), 149 to 169 (WNTR…PLVL), 182 to 202 (ISFL…IIAL), 219 to 239 (GGLS…AFTF), 262 to 282 (ISVI…YLLF), 309 to 329 (IVRL…NFSL), 356 to 376 (FPLL…WYFF), 377 to 397 (QFLG…AIVL), and 410 to 430 (IVAS…ISTN).

Belongs to the amino acid/polyamine transporter 2 family. Amino acid/auxin permease (AAAP) (TC 2.A.18.6) subfamily.

The protein localises to the membrane. This is Amino acid transporter AVT6D from Arabidopsis thaliana (Mouse-ear cress).